The chain runs to 946 residues: Probable outer membrane protein pmp18 (946 aa).

Positions 1–16 are cleaved as a signal peptide; sequence MQNNRSLSKSSFFVGA. The Autotransporter domain maps to 668 to 946; it reads QGQIAPTASG…YLHAGTTFKF (279 aa).

The protein belongs to the PMP outer membrane protein family.

Its subcellular location is the secreted. The protein resides in the cell wall. The protein localises to the cell outer membrane. The chain is Probable outer membrane protein pmp18 (pmp18) from Chlamydia pneumoniae (Chlamydophila pneumoniae).